The primary structure comprises 227 residues: RNA-free ribonuclease P (227 aa).

Belongs to the HARP family.

The catalysed reaction is Endonucleolytic cleavage of RNA, removing 5'-extranucleotides from tRNA precursor.. RNA-free RNase P that catalyzes the removal of the 5'-leader sequence from pre-tRNA to produce the mature 5'-terminus. In Archaeoglobus fulgidus (strain ATCC 49558 / DSM 4304 / JCM 9628 / NBRC 100126 / VC-16), this protein is RNA-free ribonuclease P.